Reading from the N-terminus, the 880-residue chain is Beta-glucosidase 2 (880 aa).

An N-terminal signal peptide occupies residues 1–17; sequence MLLILELLVLIIGLGVA. 3 N-linked (GlcNAc...) asparagine glycosylation sites follow: Asn24, Asn77, and Asn271. Asp299 is an active-site residue. Asn336, Asn343, Asn376, Asn548, Asn589, Asn712, Asn743, and Asn794 each carry an N-linked (GlcNAc...) asparagine glycan.

The protein belongs to the glycosyl hydrolase 3 family.

It catalyses the reaction Hydrolysis of terminal, non-reducing beta-D-glucosyl residues with release of beta-D-glucose.. It participates in glycan metabolism; cellulose degradation. This chain is Beta-glucosidase 2 (BGL2), found in Saccharomycopsis fibuligera (Yeast).